Reading from the N-terminus, the 290-residue chain is Ribosomal RNA small subunit methyltransferase A (290 aa).

S-adenosyl-L-methionine-binding residues include asparagine 27, leucine 29, glycine 54, glutamate 75, aspartate 100, and asparagine 125.

The protein belongs to the class I-like SAM-binding methyltransferase superfamily. rRNA adenine N(6)-methyltransferase family. RsmA subfamily.

The protein resides in the cytoplasm. It carries out the reaction adenosine(1518)/adenosine(1519) in 16S rRNA + 4 S-adenosyl-L-methionine = N(6)-dimethyladenosine(1518)/N(6)-dimethyladenosine(1519) in 16S rRNA + 4 S-adenosyl-L-homocysteine + 4 H(+). In terms of biological role, specifically dimethylates two adjacent adenosines (A1518 and A1519) in the loop of a conserved hairpin near the 3'-end of 16S rRNA in the 30S particle. May play a critical role in biogenesis of 30S subunits. The protein is Ribosomal RNA small subunit methyltransferase A of Streptococcus agalactiae serotype V (strain ATCC BAA-611 / 2603 V/R).